The following is a 367-amino-acid chain: Pectate lyase 1 (367 aa).

Residues 1 to 21 form the signal peptide; sequence MASPCLIAVLVFLCAIVSCYS. Cys28 and Cys45 are oxidised to a cystine. Residues 38-305 form a beta-helix region; it reads NRMKLADCAV…YKKEVTKRIG (268 aa). The igE-binding. Binds to IgE in 5 out of 7 patients tested stretch occupies residues 92 to 104; it reads IFSQNMNIKLKMP. Cysteines 128 and 147 form a disulfide. An N-linked (GlcNAc...) asparagine glycan is attached at Asn148. Asp170 is a binding site for Ca(2+). Asn178 carries N-linked (GlcNAc...) asparagine glycosylation. Ca(2+) contacts are provided by Asp194 and Asp198. Residues 239–250 are igE-binding. Binds to IgE in 6 out of 7 patients tested; that stretch reads AFNQFGPNAGQR. Arg250 is an active-site residue. The interval 251–258 is igE-binding. Binds to IgE in 5 out of 7 patients tested; sequence MPRARYGL. A disulfide bond links Cys306 and Cys312. The interval 317-327 is igE-binding. Binds to IgE in 3 out of 7 patients tested; it reads WRSTRDAFING.

Belongs to the polysaccharide lyase 1 family. Amb a subfamily. Requires Ca(2+) as cofactor. In terms of processing, N-glycosylated; consists of complex-type N-glycans containing the Lewis a antigen (Galbeta1-3(Fucalpha1-4)GlcNAcbeta1-). As to expression, expressed in pollen (at protein level).

The enzyme catalyses Eliminative cleavage of (1-&gt;4)-alpha-D-galacturonan to give oligosaccharides with 4-deoxy-alpha-D-galact-4-enuronosyl groups at their non-reducing ends.. The protein operates within glycan metabolism; pectin degradation; 2-dehydro-3-deoxy-D-gluconate from pectin: step 2/5. In terms of biological role, has low pectate lyase activity. The protein is Pectate lyase 1 of Juniperus ashei (Ozark white cedar).